The chain runs to 372 residues: Protein phosphatase 1 regulatory subunit 42 (372 aa).

LRR repeat units follow at residues 30–51 (RITH…TMCR), 52–71 (NLTV…NLGS), 72–93 (NLTH…SGLK), 94–115 (RLEK…EGLR), 116–137 (ELRE…LFDP), 146–167 (SLSV…AVLE), and 168–189 (NLTQ…EFVL). The LRRCT domain occupies 203-241 (NPVCLKPKYREKVTIISKTLEILDGKEIKEMARQFLLNW).

Its subcellular location is the cytoplasm. The protein localises to the cytoskeleton. The protein resides in the microtubule organizing center. It localises to the centrosome. May regulate phosphatase activity of protein phosphatase 1 (PP1) complexes. The polypeptide is Protein phosphatase 1 regulatory subunit 42 (ppp1r42) (Xenopus laevis (African clawed frog)).